The chain runs to 323 residues: Cytochrome c biogenesis protein CcsA (323 aa).

Helical transmembrane passes span 9–29, 37–57, 71–91, 100–120, 145–165, 227–247, 261–275, and 288–308; these read ILTHISFSVISIVITIQLITL, LYVSSEKGMIATFFCITGLLV, LYESLLFLSWAFSIIHLFTYF, VSAITAPSTIFTQGFATSGFL, MVLGYAALLCGSLFSVALIVI, IISLGFIFLSIGILSGAVWAN, TWAFITWTIFAIYLH, and AIVASMGFLIIWICYFGVNLL.

Belongs to the CcmF/CycK/Ccl1/NrfE/CcsA family. As to quaternary structure, may interact with Ccs1.

Its subcellular location is the plastid. It is found in the chloroplast thylakoid membrane. Its function is as follows. Required during biogenesis of c-type cytochromes (cytochrome c6 and cytochrome f) at the step of heme attachment. In Cucumis sativus (Cucumber), this protein is Cytochrome c biogenesis protein CcsA.